The sequence spans 169 residues: Spore protein SP21 (169 aa).

2 disordered regions span residues 1–21 (MADLSVRRGTGSTPQRTREWD) and 150–169 (QPKRIQVASSGTEQKEHIKA). A sHSP domain is found at 47–159 (QGPPAFVPAF…QPKRIQVASS (113 aa)).

The protein belongs to the small heat shock protein (HSP20) family.

Functionally, may stabilize cellular components during stress and spore formation. The polypeptide is Spore protein SP21 (hspA) (Stigmatella aurantiaca (strain DW4/3-1)).